The primary structure comprises 180 residues: Ferric nitrobindin-like protein (180 aa).

The GXWXGXG signature appears at 21–27 (GRWEGAG).

It belongs to the nitrobindin family.

The polypeptide is Ferric nitrobindin-like protein (Kineococcus radiotolerans (strain ATCC BAA-149 / DSM 14245 / SRS30216)).